A 336-amino-acid chain; its full sequence is Phosphate acyltransferase (336 aa).

Belongs to the PlsX family. Homodimer. Probably interacts with PlsY.

It is found in the cytoplasm. It catalyses the reaction a fatty acyl-[ACP] + phosphate = an acyl phosphate + holo-[ACP]. The protein operates within lipid metabolism; phospholipid metabolism. In terms of biological role, catalyzes the reversible formation of acyl-phosphate (acyl-PO(4)) from acyl-[acyl-carrier-protein] (acyl-ACP). This enzyme utilizes acyl-ACP as fatty acyl donor, but not acyl-CoA. This is Phosphate acyltransferase from Dictyoglomus thermophilum (strain ATCC 35947 / DSM 3960 / H-6-12).